Reading from the N-terminus, the 1342-residue chain is DNA-directed RNA polymerase subunit beta (1342 aa).

It belongs to the RNA polymerase beta chain family. As to quaternary structure, the RNAP catalytic core consists of 2 alpha, 1 beta, 1 beta' and 1 omega subunit. When a sigma factor is associated with the core the holoenzyme is formed, which can initiate transcription.

The enzyme catalyses RNA(n) + a ribonucleoside 5'-triphosphate = RNA(n+1) + diphosphate. DNA-dependent RNA polymerase catalyzes the transcription of DNA into RNA using the four ribonucleoside triphosphates as substrates. This is DNA-directed RNA polymerase subunit beta from Shewanella amazonensis (strain ATCC BAA-1098 / SB2B).